We begin with the raw amino-acid sequence, 171 residues long: 6,7-dimethyl-8-ribityllumazine synthase (171 aa).

Residues phenylalanine 24, 58–60 (ALE), and 82–84 (AVI) contribute to the 5-amino-6-(D-ribitylamino)uracil site. 87-88 (ET) lines the (2S)-2-hydroxy-3-oxobutyl phosphate pocket. The active-site Proton donor is the histidine 90. Asparagine 115 is a 5-amino-6-(D-ribitylamino)uracil binding site. Arginine 129 lines the (2S)-2-hydroxy-3-oxobutyl phosphate pocket. The disordered stretch occupies residues 150 to 171 (ALDQLGDDEDEEEDEEDEEERA). A compositionally biased stretch (acidic residues) spans 154 to 171 (LGDDEDEEEDEEDEEERA).

Belongs to the DMRL synthase family.

It catalyses the reaction (2S)-2-hydroxy-3-oxobutyl phosphate + 5-amino-6-(D-ribitylamino)uracil = 6,7-dimethyl-8-(1-D-ribityl)lumazine + phosphate + 2 H2O + H(+). Its pathway is cofactor biosynthesis; riboflavin biosynthesis; riboflavin from 2-hydroxy-3-oxobutyl phosphate and 5-amino-6-(D-ribitylamino)uracil: step 1/2. Catalyzes the formation of 6,7-dimethyl-8-ribityllumazine by condensation of 5-amino-6-(D-ribitylamino)uracil with 3,4-dihydroxy-2-butanone 4-phosphate. This is the penultimate step in the biosynthesis of riboflavin. The chain is 6,7-dimethyl-8-ribityllumazine synthase from Burkholderia ambifaria (strain MC40-6).